Here is a 533-residue protein sequence, read N- to C-terminus: Peptide chain release factor 3 (533 aa).

In terms of domain architecture, tr-type G spans 9-284 (ARRRTFAIIS…ALCELSPPPL (276 aa)). Residues 18-25 (SHPDAGKT), 95-99 (DTPGH), and 149-152 (NKLD) each bind GTP.

It belongs to the TRAFAC class translation factor GTPase superfamily. Classic translation factor GTPase family. PrfC subfamily.

It localises to the cytoplasm. Functionally, increases the formation of ribosomal termination complexes and stimulates activities of RF-1 and RF-2. It binds guanine nucleotides and has strong preference for UGA stop codons. It may interact directly with the ribosome. The stimulation of RF-1 and RF-2 is significantly reduced by GTP and GDP, but not by GMP. The sequence is that of Peptide chain release factor 3 from Cupriavidus taiwanensis (strain DSM 17343 / BCRC 17206 / CCUG 44338 / CIP 107171 / LMG 19424 / R1) (Ralstonia taiwanensis (strain LMG 19424)).